The sequence spans 160 residues: Cell division protein SepF (160 aa).

Residues 18-30 (AEGEDDFEDDVDT) are compositionally biased toward acidic residues. The interval 18–72 (AEGEDDFEDDVDTGETSFDSDHSVTPMPSSSASASTPSAPREQSNPFQGGRVSRI) is disordered. Over residues 45-57 (PSSSASASTPSAP) the composition is skewed to low complexity.

Belongs to the SepF family. Homodimer. Interacts with FtsZ.

The protein resides in the cytoplasm. Cell division protein that is part of the divisome complex and is recruited early to the Z-ring. Probably stimulates Z-ring formation, perhaps through the cross-linking of FtsZ protofilaments. Its function overlaps with FtsA. The polypeptide is Cell division protein SepF (Bifidobacterium adolescentis (strain ATCC 15703 / DSM 20083 / NCTC 11814 / E194a)).